The chain runs to 307 residues: N-acetylmuramic acid 6-phosphate etherase 2 (307 aa).

Residues I62–K225 enclose the SIS domain. The active-site Proton donor is E90. Residue E121 is part of the active site.

Belongs to the GCKR-like family. MurNAc-6-P etherase subfamily. In terms of assembly, homodimer.

The enzyme catalyses N-acetyl-D-muramate 6-phosphate + H2O = N-acetyl-D-glucosamine 6-phosphate + (R)-lactate. The protein operates within amino-sugar metabolism; 1,6-anhydro-N-acetylmuramate degradation. It participates in amino-sugar metabolism; N-acetylmuramate degradation. Its pathway is cell wall biogenesis; peptidoglycan recycling. Its function is as follows. Specifically catalyzes the cleavage of the D-lactyl ether substituent of MurNAc 6-phosphate, producing GlcNAc 6-phosphate and D-lactate. Together with AnmK, is also required for the utilization of anhydro-N-acetylmuramic acid (anhMurNAc) either imported from the medium or derived from its own cell wall murein, and thus plays a role in cell wall recycling. The chain is N-acetylmuramic acid 6-phosphate etherase 2 from Vibrio cholerae serotype O1 (strain ATCC 39315 / El Tor Inaba N16961).